The primary structure comprises 149 residues: Transcriptional repressor NrdR (149 aa).

A zinc finger spans residues 3–34; the sequence is CPFCSENDTKVIDSRLVADGHQVRRRRQCLAC. Residues 49 to 139 enclose the ATP-cone domain; it reads PKVIKSNGNR…VYRSFEDIRE (91 aa).

This sequence belongs to the NrdR family. Zn(2+) is required as a cofactor.

In terms of biological role, negatively regulates transcription of bacterial ribonucleotide reductase nrd genes and operons by binding to NrdR-boxes. The sequence is that of Transcriptional repressor NrdR from Vibrio parahaemolyticus serotype O3:K6 (strain RIMD 2210633).